Consider the following 104-residue polypeptide: MYAVIKTGGKQYKVSEGDVLRVEKLAGEAGASVEFDQVLMVGEGDDVKVGAPTVEGGKVTAEVLGQGRARKIEIQKFKRRKQYRRFAGHRQQFTEVKITGISAG.

The protein belongs to the bacterial ribosomal protein bL21 family. In terms of assembly, part of the 50S ribosomal subunit. Contacts protein L20.

In terms of biological role, this protein binds to 23S rRNA in the presence of protein L20. In Alkalilimnicola ehrlichii (strain ATCC BAA-1101 / DSM 17681 / MLHE-1), this protein is Large ribosomal subunit protein bL21.